The primary structure comprises 294 residues: Beta-lactamase SME-1 (294 aa).

The N-terminal stretch at 1-27 (MSNKVNFKTASFLFSVCLALSAFNAHA) is a signal peptide. A disulfide bridge links Cys72 with Cys242. Catalysis depends on Ser73, which acts as the Nucleophile; acyl-ester intermediate. Residues Ser73, Lys76, Ser133, and Asn135 each coordinate a beta-lactam. Residue Glu172 is the Proton acceptor of the active site. Thr239 is an a beta-lactam binding site.

It belongs to the class-A beta-lactamase family.

It carries out the reaction a beta-lactam + H2O = a substituted beta-amino acid. With respect to regulation, partially inhibited by the beta-lactamase-blocking agents, clavulanic acid and tazobactam. Not inhibited by EDTA. Functionally, class A beta-lactamase which confers resistance to the beta-lactam antibiotics, including penicillins, some cephalosporins and carbapenems, to JM109 strain E.coli. Acts via hydrolysis of the beta-lactam ring. Has penicillin-, cephalosporin- and carbapenem-hydrolyzing activities. This chain is Beta-lactamase SME-1, found in Serratia marcescens.